Here is a 195-residue protein sequence, read N- to C-terminus: Probable molybdenum cofactor guanylyltransferase (195 aa).

GTP is bound by residues 8–10 (LSG), Lys20, Asp65, and Asp96. Position 96 (Asp96) interacts with Mg(2+).

This sequence belongs to the MobA family. Mg(2+) is required as a cofactor.

Its subcellular location is the cytoplasm. It catalyses the reaction Mo-molybdopterin + GTP + H(+) = Mo-molybdopterin guanine dinucleotide + diphosphate. In terms of biological role, transfers a GMP moiety from GTP to Mo-molybdopterin (Mo-MPT) cofactor (Moco or molybdenum cofactor) to form Mo-molybdopterin guanine dinucleotide (Mo-MGD) cofactor. The chain is Probable molybdenum cofactor guanylyltransferase from Bacillus licheniformis (strain ATCC 14580 / DSM 13 / JCM 2505 / CCUG 7422 / NBRC 12200 / NCIMB 9375 / NCTC 10341 / NRRL NRS-1264 / Gibson 46).